A 438-amino-acid chain; its full sequence is 23S rRNA (uracil(1939)-C(5))-methyltransferase RlmD (438 aa).

The TRAM domain maps to 9–68; it reads RRTVNRHIITVTADNLDAQGQGVARHQGKTIFVAGLLPGEQAQVQLTEEKRQFAKAKLVK. The [4Fe-4S] cluster site is built by Cys-81, Cys-87, Cys-90, and Cys-168. Gln-272, Phe-301, Asn-306, Glu-322, Asn-349, and Asp-370 together coordinate S-adenosyl-L-methionine. Cys-396 serves as the catalytic Nucleophile.

Belongs to the class I-like SAM-binding methyltransferase superfamily. RNA M5U methyltransferase family. RlmD subfamily.

It carries out the reaction uridine(1939) in 23S rRNA + S-adenosyl-L-methionine = 5-methyluridine(1939) in 23S rRNA + S-adenosyl-L-homocysteine + H(+). Functionally, catalyzes the formation of 5-methyl-uridine at position 1939 (m5U1939) in 23S rRNA. The chain is 23S rRNA (uracil(1939)-C(5))-methyltransferase RlmD from Photorhabdus laumondii subsp. laumondii (strain DSM 15139 / CIP 105565 / TT01) (Photorhabdus luminescens subsp. laumondii).